The primary structure comprises 121 residues: Small ribosomal subunit protein uS13 (121 aa).

The interval 93 to 121 is disordered; the sequence is RGLPMRGQRTRTNARTRKGPRKSAAALKK.

This sequence belongs to the universal ribosomal protein uS13 family. Part of the 30S ribosomal subunit. Forms a loose heterodimer with protein S19. Forms two bridges to the 50S subunit in the 70S ribosome.

Located at the top of the head of the 30S subunit, it contacts several helices of the 16S rRNA. In the 70S ribosome it contacts the 23S rRNA (bridge B1a) and protein L5 of the 50S subunit (bridge B1b), connecting the 2 subunits; these bridges are implicated in subunit movement. Contacts the tRNAs in the A and P-sites. This chain is Small ribosomal subunit protein uS13, found in Methylibium petroleiphilum (strain ATCC BAA-1232 / LMG 22953 / PM1).